A 313-amino-acid chain; its full sequence is Olfactory receptor 8B3 (313 aa).

Residues M1–Q25 are Extracellular-facing. N5 is a glycosylation site (N-linked (GlcNAc...) asparagine). Residues P26–I46 form a helical membrane-spanning segment. The Cytoplasmic portion of the chain corresponds to I47–H54. The chain crosses the membrane as a helical span at residues L55 to S75. Residues V76 to T99 lie on the Extracellular side of the membrane. The cysteines at positions 97 and 189 are disulfide-linked. Residues Q100–Y120 form a helical membrane-spanning segment. The Cytoplasmic segment spans residues D121 to Q139. Residues V140 to T160 form a helical membrane-spanning segment. Topologically, residues G161–V197 are extracellular. The chain crosses the membrane as a helical span at residues V198 to S217. Residues Y218 to A237 are Cytoplasmic-facing. A helical membrane pass occupies residues F238 to M258. The Extracellular segment spans residues Y259–G270. Residues K271–L291 traverse the membrane as a helical segment. At R292 to F313 the chain is on the cytoplasmic side.

It belongs to the G-protein coupled receptor 1 family.

Its subcellular location is the cell membrane. Odorant receptor. The protein is Olfactory receptor 8B3 (OR8B3) of Homo sapiens (Human).